The primary structure comprises 1031 residues: MAFTEANEREVQSSYEKENVKIIREEEAKDQESTDDIAVEDGTGTSPDLNFFSTQNVMQMNFEDEYSEFSNEDDEAEIDNSFADSIPNEPEIPDMQDEYSRDSHSQQSVEEQNNTTNTDEDASVNEFSVAADISDVNTLGKDNSESTEEPVNEVNETATLGNEDVGERSGFPSEGLDNEPESQRDLDETGNLAPEDLKDEVKSVHEFNEPNDLRQQEESYSDDDDTNVNEFEDVNEIENEHQLSVADEDQTSRLVKGKMIFVGKEDFGEEADISNSVFIEQNGPNSDTVSGFKETSSIVNSSSTTEKPGVALDSQNDTSIFNEEQTNSLTETFNDLTLDHLPENVESEPVAGKENETAKNESGASDNDHKANVHVFVLKSSEDAITLNEEKIATQDDPLEAPTPIVASSSTIFLNSNQRNDELSASGSQEPHPKDGTNSTSSLPLDTNNLSNSEPPSHVLDASSETIEVIQTIKKLQNQVPETIKDEVGKKNTAFSPGTSLSTNHVKTKSRSAHNNSTSPFSTAVSSWLNPLRYPSDKSPRVISSYLESVFISKPRSIGDAQKLEILEYLQSQSSTVSNQVFTLLSNFIQNPLFVLDECFDEFRNLILMHNSHTVHTVVWKTISSWTSYDYEMQYSSLSIKNCDSDKAIRKDLDRTFAPEILSHFFSNRQQLEPTDNIAESTANLHRVLRSLAIVLPQVGYTQGMSWIAGALLMHLPAPQAFALLVFLFKNYHLQNIFSSEMRGLSRVLHQFTRLVEDYMPSLAIHFKRQDIKTCSYASEWFLTLFAYKFPLEVVAHLYDILFLYGPGILFNFGLALLSHSQESLLKLNMDRLISYLKEDIFLAFKETQEGENYDTSLFVKTAFSFEIQPDVLDRYGNEYDILLKSEHELDSSLEEMRNRHKSLNEHFIMLSDSMANLQVEHENMSALLLKEKMYLKNQTVEQASLKSEIASLNSQLAKQKSEIEQAFQGDMEAIIAENLEIMVESQSLEDEIFRKEKQLAETKVNLAVLDEDHMMALQKWSQLMNRIKTK.

The span at 1–32 (MAFTEANEREVQSSYEKENVKIIREEEAKDQE) shows a compositional bias: basic and acidic residues. Disordered stretches follow at residues 1 to 229 (MAFT…TNVN), 278 to 317 (FIEQ…SQND), 339 to 371 (DHLP…DHKA), 420 to 459 (NDEL…PSHV), and 490 to 520 (KKNT…STSP). A compositionally biased stretch (polar residues) spans 43–59 (TGTSPDLNFFSTQNVMQ). Positions 62 to 78 (FEDEYSEFSNEDDEAEI) are enriched in acidic residues. Positions 105–117 (SQQSVEEQNNTTN) are enriched in polar residues. The span at 195–217 (EDLKDEVKSVHEFNEPNDLRQQE) shows a compositional bias: basic and acidic residues. Positions 219–229 (SYSDDDDTNVN) are enriched in acidic residues. The span at 278-306 (FIEQNGPNSDTVSGFKETSSIVNSSSTTE) shows a compositional bias: polar residues. 3 stretches are compositionally biased toward polar residues: residues 420-429 (NDELSASGSQ), 436-455 (GTNS…NSEP), and 493-505 (TAFS…STNH). The region spanning 610–806 (HNSHTVHTVV…HLYDILFLYG (197 aa)) is the Rab-GAP TBC domain. The chain crosses the membrane as a helical span at residues 798–818 (LYDILFLYGPGILFNFGLALL).

This sequence belongs to the GYP5 family.

Its subcellular location is the membrane. It localises to the cytoplasm. GTPase-activating protein involved in ER to Golgi trafficking and polarized exocytosis. The protein is GTPase activating protein Gyp51 (gyp51) of Schizosaccharomyces pombe (strain 972 / ATCC 24843) (Fission yeast).